Reading from the N-terminus, the 180-residue chain is ATP synthase subunit delta (180 aa).

The protein belongs to the ATPase delta chain family. As to quaternary structure, F-type ATPases have 2 components, F(1) - the catalytic core - and F(0) - the membrane proton channel. F(1) has five subunits: alpha(3), beta(3), gamma(1), delta(1), epsilon(1). F(0) has three main subunits: a(1), b(2) and c(10-14). The alpha and beta chains form an alternating ring which encloses part of the gamma chain. F(1) is attached to F(0) by a central stalk formed by the gamma and epsilon chains, while a peripheral stalk is formed by the delta and b chains.

The protein localises to the cell inner membrane. F(1)F(0) ATP synthase produces ATP from ADP in the presence of a proton or sodium gradient. F-type ATPases consist of two structural domains, F(1) containing the extramembraneous catalytic core and F(0) containing the membrane proton channel, linked together by a central stalk and a peripheral stalk. During catalysis, ATP synthesis in the catalytic domain of F(1) is coupled via a rotary mechanism of the central stalk subunits to proton translocation. Its function is as follows. This protein is part of the stalk that links CF(0) to CF(1). It either transmits conformational changes from CF(0) to CF(1) or is implicated in proton conduction. The sequence is that of ATP synthase subunit delta from Cupriavidus necator (strain ATCC 17699 / DSM 428 / KCTC 22496 / NCIMB 10442 / H16 / Stanier 337) (Ralstonia eutropha).